The primary structure comprises 158 residues: Endoribonuclease YbeY (158 aa).

Residues histidine 117, histidine 121, and histidine 127 each contribute to the Zn(2+) site.

This sequence belongs to the endoribonuclease YbeY family. Zn(2+) serves as cofactor.

Its subcellular location is the cytoplasm. In terms of biological role, single strand-specific metallo-endoribonuclease involved in late-stage 70S ribosome quality control and in maturation of the 3' terminus of the 16S rRNA. The chain is Endoribonuclease YbeY from Psychromonas ingrahamii (strain DSM 17664 / CCUG 51855 / 37).